A 296-amino-acid chain; its full sequence is Morphine 6-dehydrogenase (296 aa).

NADP(+) is bound at residue 13–22; the sequence is GVKMPALGLG. Catalysis depends on Tyr52, which acts as the Proton donor. Residue His110 participates in substrate binding.

It belongs to the aldo/keto reductase family. In terms of assembly, monomer.

The enzyme catalyses morphine + NAD(+) = morphinone + NADH + H(+). It carries out the reaction morphine + NADP(+) = morphinone + NADPH + H(+). It participates in alkaloid degradation; codeine degradation. Its pathway is alkaloid degradation; morphine degradation. In terms of biological role, oxidizes only the C-6 hydroxy group of morphine and codeine. This is Morphine 6-dehydrogenase (morA) from Pseudomonas putida (Arthrobacter siderocapsulatus).